The chain runs to 254 residues: Glutamate racemase (254 aa).

Residues 7–8 and 39–40 each bind substrate; these read DS and YG. Catalysis depends on Cys70, which acts as the Proton donor/acceptor. 71-72 is a binding site for substrate; sequence NT. Catalysis depends on Cys178, which acts as the Proton donor/acceptor. 179 to 180 is a substrate binding site; the sequence is TH.

Belongs to the aspartate/glutamate racemases family.

It carries out the reaction L-glutamate = D-glutamate. Its pathway is cell wall biogenesis; peptidoglycan biosynthesis. Provides the (R)-glutamate required for cell wall biosynthesis. This Aquifex aeolicus (strain VF5) protein is Glutamate racemase.